A 321-amino-acid polypeptide reads, in one-letter code: Cytochrome c biogenesis protein CcsA (321 aa).

The next 7 helical transmembrane spans lie at 9 to 29 (ILTHISFSTISIVITIHLITL), 44 to 64 (GMIATFFSITGFLVSRWVSSG), 68 to 88 (LSNLYESLIFLSWTLYILHTI), 143 to 163 (MLLSYATLLCGSLLSAALLII), 225 to 245 (VISLGFTLLTVGILCGAVWAN), 259 to 273 (TWAFITWTIFAIYLH), and 288 to 308 (VASIGFLIIWICYFGINLLGI).

This sequence belongs to the CcmF/CycK/Ccl1/NrfE/CcsA family. May interact with Ccs1.

The protein localises to the plastid. Its subcellular location is the chloroplast thylakoid membrane. In terms of biological role, required during biogenesis of c-type cytochromes (cytochrome c6 and cytochrome f) at the step of heme attachment. This Zea mays (Maize) protein is Cytochrome c biogenesis protein CcsA.